A 542-amino-acid polypeptide reads, in one-letter code: Esterase S (542 aa).

The signal sequence occupies residues 1-22; that stretch reads MTQILLPIALLCLFAASTLSNP. A disulfide bond links Cys-81 and Cys-100. Asn-110 carries an N-linked (GlcNAc...) asparagine glycan. Catalysis depends on Ser-204, which acts as the Acyl-ester intermediate. A disulfide bond links Cys-256 and Cys-268. A glycan (N-linked (GlcNAc...) asparagine) is linked at Asn-396. An intrachain disulfide couples Cys-507 to Cys-528.

This sequence belongs to the type-B carboxylesterase/lipase family. In terms of assembly, monomer. As to expression, specifically expressed in the ejaculatory bulbs of male.

It is found in the secreted. It carries out the reaction a carboxylic ester + H2O = an alcohol + a carboxylate + H(+). Functionally, transferred from the ejaculatory bulbs of males to the female genitals upon copulation, plays an important role in the reproductive biology. The polypeptide is Esterase S (EstS) (Drosophila virilis (Fruit fly)).